A 219-amino-acid chain; its full sequence is MKYLLTLLMALSLVNLMLTRPTPEDDGGTSEEPQTQETTGETTGSDEKKGASEEPNADDASKTDDVEEKGDDDTAKKEDDGESKDGEGSEKSDKEKGEPKNDPRETYNKVIEQLDQIKVDNVEDGHERSELAADIQRYLRNPIVDVIGSAGDFSKIAKCFKSMVGDAKKAIEEDVKGFKECTAKKDSNAYQCSQDRSTVQDKIAKMSSKIASCVASNRS.

A signal peptide spans 1–19; that stretch reads MKYLLTLLMALSLVNLMLT. Positions 19–109 are disordered; the sequence is TRPTPEDDGG…KNDPRETYNK (91 aa). The segment covering 30 to 43 has biased composition (low complexity); that stretch reads SEEPQTQETTGETT. Over residues 72–107 the composition is skewed to basic and acidic residues; that stretch reads DDTAKKEDDGESKDGEGSEKSDKEKGEPKNDPRETY.

As to expression, salivary gland (at protein level).

Its subcellular location is the secreted. Its function is as follows. Induces expression of IL4 in host skin by diverting host CD4 cells away from Th1 and towards Th2 responsiveness. Induces expression of IL10 in host skin. Down-regulates expression of IL12B, IFN-gamma (IFNG) and TNF-alpha (TNF) in host skin. The sequence is that of Salivary IL-4-inducing protein from Aedes aegypti (Yellowfever mosquito).